Consider the following 1094-residue polypeptide: RecBCD enzyme subunit RecB (1094 aa).

The region spanning 1–326 is the UvrD-like helicase ATP-binding domain; it reads MDRFELLGPL…YTLGVNWRSD (326 aa). The interval 1–713 is DNA-binding and helicase activity, interacts with RecC; that stretch reads MDRFELLGPL…LLRGRRPGQS (713 aa). 21–28 contributes to the ATP binding site; the sequence is ASAGTGKT. The region spanning 357–613 is the UvrD-like helicase C-terminal domain; it reads AGHRLASAPR…QIMTVFVAKG (257 aa). The tract at residues 775 to 1094 is nuclease activity, interacts with RecD and RecA; that stretch reads TWRRTSYSDL…DLLDRGRLQS (320 aa). 3 residues coordinate Mg(2+): His-838, Asp-975, and Asp-989. The active-site For nuclease activity is Asp-989.

Belongs to the helicase family. UvrD subfamily. As to quaternary structure, heterotrimer of RecB, RecC and RecD. All subunits contribute to DNA-binding. Interacts with RecA. The cofactor is Mg(2+).

The enzyme catalyses Exonucleolytic cleavage (in the presence of ATP) in either 5'- to 3'- or 3'- to 5'-direction to yield 5'-phosphooligonucleotides.. It catalyses the reaction Couples ATP hydrolysis with the unwinding of duplex DNA by translocating in the 3'-5' direction.. It carries out the reaction ATP + H2O = ADP + phosphate + H(+). Functionally, a helicase/nuclease that prepares dsDNA breaks (DSB) for recombinational DNA repair. Binds to DSBs and unwinds DNA via a highly rapid and processive ATP-dependent bidirectional helicase activity. In the holoenzyme this subunit contributes ATPase, 3'-5' helicase, exonuclease activity and loads RecA onto ssDNA. Unlike the case in E.coli, suppresses RecA-dependent homologous recombination, is instead required for single-strand annealing pathway repair of DSB. This chain is RecBCD enzyme subunit RecB, found in Mycobacterium tuberculosis (strain CDC 1551 / Oshkosh).